We begin with the raw amino-acid sequence, 673 residues long: Cell division cycle protein 23 homolog (673 aa).

TPR repeat units follow at residues Ala86–Asn120, Asn159–His195, Glu232–Ile267, Pro332–Arg365, Trp400–Leu433, Ala434–Asp467, Arg469–Asp501, Ser502–Glu535, Leu539–Ala572, and Ile577–Cys610. Positions Ser628 to Phe673 are disordered. The span at Ala635 to Gly646 shows a compositional bias: low complexity. Residues Met650–Phe673 show a composition bias toward acidic residues.

This sequence belongs to the APC8/CDC23 family. As to quaternary structure, the APC/C complex is probably composed of at least 12 subunits: apc-2, apc-10, apc-11, cdc-26, emb-1, emb-27, emb-30, mat-1, mat-2, mat-3, such-1 and gfi-3.

Its pathway is protein modification; protein ubiquitination. Probable component of the anaphase promoting complex/cyclosome (APC/C), a cell cycle-regulated E3 ubiquitin ligase that controls progression through mitosis and the G1 phase of the cell cycle. The APC/C complex acts by mediating ubiquitination and subsequent degradation of target proteins. Developmental role in early embryogenesis and the metaphase to anaphase transition in oocyte and spermatocyte meiosis and mitosis in germ cells. Required for embryonic anterior-posterior axis formation. Plays a role in regulating the abundance of glr-1 receptors in postmitotic neurons, which may in turn control animal locomotion. Involved in regulating GABA neurotransmitter release at neuromuscular junctions in GABA motor neurons. The polypeptide is Cell division cycle protein 23 homolog (Caenorhabditis elegans).